A 268-amino-acid polypeptide reads, in one-letter code: Energy-coupling factor transporter transmembrane protein EcfT (268 aa).

The next 5 helical transmembrane spans lie at Val29–Val49, Ile75–Val95, Leu107–Leu127, Leu152–Ile172, and Trp242–Ala262.

The protein belongs to the energy-coupling factor EcfT family. Forms a stable energy-coupling factor (ECF) transporter complex composed of 2 membrane-embedded substrate-binding proteins (S component), 2 ATP-binding proteins (A component) and 2 transmembrane proteins (T component). May be able to interact with more than 1 S component at a time.

The protein localises to the cell membrane. Its function is as follows. Transmembrane (T) component of an energy-coupling factor (ECF) ABC-transporter complex. Unlike classic ABC transporters this ECF transporter provides the energy necessary to transport a number of different substrates. The protein is Energy-coupling factor transporter transmembrane protein EcfT of Bacillus selenitireducens (strain ATCC 700615 / DSM 15326 / MLS10).